Consider the following 239-residue polypeptide: Transcriptional regulatory protein BtsR (239 aa).

Positions 3–116 (KVLIVDDEPL…RLEKTLARLR (114 aa)) constitute a Response regulatory domain. Asp54 carries the post-translational modification 4-aspartylphosphate. In terms of domain architecture, HTH LytTR-type spans 137-239 (IPCTGHSRIY…LKSLKEAIGL (103 aa)).

Post-translationally, phosphorylated by BtsS.

In terms of biological role, member of the two-component regulatory system BtsS/BtsR. BtsR regulates expression of btsT by binding to its promoter region. The polypeptide is Transcriptional regulatory protein BtsR (Escherichia coli O6:H1 (strain CFT073 / ATCC 700928 / UPEC)).